The following is a 248-amino-acid chain: Proteasome subunit alpha type-7 (248 aa).

Ser130 carries O-linked (GlcNAc) serine glycosylation. At Tyr153 the chain carries Phosphotyrosine.

This sequence belongs to the peptidase T1A family. As to quaternary structure, the 26S proteasome consists of a 20S proteasome core and two 19S regulatory subunits. The 20S proteasome core is a barrel-shaped complex made of 28 subunits that are arranged in four stacked rings. The two outer rings are each formed by seven alpha subunits, and the two inner rings are formed by seven beta subunits. The proteolytic activity is exerted by three beta-subunits PSMB5, PSMB6 and PSMB7. PSMA7 interacts directly with the PSMG1-PSMG2 heterodimer which promotes 20S proteasome assembly. Interacts with HIF1A. Interacts with RAB7A. Interacts with PRKN. Interacts with ABL1 and ABL2. Interacts with EMAP2. Interacts with MAVS.

It localises to the cytoplasm. It is found in the nucleus. Its function is as follows. Component of the 20S core proteasome complex involved in the proteolytic degradation of most intracellular proteins. This complex plays numerous essential roles within the cell by associating with different regulatory particles. Associated with two 19S regulatory particles, forms the 26S proteasome and thus participates in the ATP-dependent degradation of ubiquitinated proteins. The 26S proteasome plays a key role in the maintenance of protein homeostasis by removing misfolded or damaged proteins that could impair cellular functions, and by removing proteins whose functions are no longer required. Associated with the PA200 or PA28, the 20S proteasome mediates ubiquitin-independent protein degradation. This type of proteolysis is required in several pathways including spermatogenesis (20S-PA200 complex) or generation of a subset of MHC class I-presented antigenic peptides (20S-PA28 complex). Inhibits the transactivation function of HIF-1A under both normoxic and hypoxia-mimicking conditions. The interaction with EMAP2 increases the proteasome-mediated HIF-1A degradation under the hypoxic conditions. Plays a role in hepatitis C virus internal ribosome entry site-mediated translation. Mediates nuclear translocation of the androgen receptor (AR) and thereby enhances androgen-mediated transactivation. Promotes MAVS degradation and thereby negatively regulates MAVS-mediated innate immune response. This chain is Proteasome subunit alpha type-7 (PSMA7), found in Pongo abelii (Sumatran orangutan).